We begin with the raw amino-acid sequence, 93 residues long: Integration host factor subunit beta (93 aa).

The protein belongs to the bacterial histone-like protein family. As to quaternary structure, heterodimer of an alpha and a beta chain.

Its function is as follows. This protein is one of the two subunits of integration host factor, a specific DNA-binding protein that functions in genetic recombination as well as in transcriptional and translational control. The sequence is that of Integration host factor subunit beta (ihfB) from Cereibacter sphaeroides (strain ATCC 17023 / DSM 158 / JCM 6121 / CCUG 31486 / LMG 2827 / NBRC 12203 / NCIMB 8253 / ATH 2.4.1.) (Rhodobacter sphaeroides).